Consider the following 657-residue polypeptide: Probable serine/threonine-protein kinase CA_C1728 (657 aa).

A Protein kinase domain is found at 10 to 274 (YKIEEEIGVG…ELSNVKNNYV (265 aa)). ATP contacts are provided by residues 16–24 (IGVGGTAVV) and Lys39. Asp143 functions as the Proton acceptor in the catalytic mechanism. A disordered region spans residues 286 to 334 (PAQIQNESNPNNKLDNDDTYYNGEPYNKEQPQEEPQEENEEPKNKIKGN). Polar residues predominate over residues 288–298 (QIQNESNPNNK). 3 consecutive PASTA domains span residues 375–441 (SVSK…DISS), 443–509 (DTDQ…VISR), and 512–577 (EVKK…VIGR). The disordered stretch occupies residues 581-657 (TAVQPPNNNN…TNTPNGTGQK (77 aa)). Low complexity-rich tracts occupy residues 584–600 (QPPN…QNQN), 613–637 (PTGG…PAGG), and 645–657 (GNVT…TGQK).

It belongs to the protein kinase superfamily. Ser/Thr protein kinase family.

The catalysed reaction is L-seryl-[protein] + ATP = O-phospho-L-seryl-[protein] + ADP + H(+). The enzyme catalyses L-threonyl-[protein] + ATP = O-phospho-L-threonyl-[protein] + ADP + H(+). This Clostridium acetobutylicum (strain ATCC 824 / DSM 792 / JCM 1419 / IAM 19013 / LMG 5710 / NBRC 13948 / NRRL B-527 / VKM B-1787 / 2291 / W) protein is Probable serine/threonine-protein kinase CA_C1728.